The primary structure comprises 752 residues: Cation-transporting P-type ATPase B (752 aa).

One can recognise an HMA domain in the interval 15-78 (RRIRLDVLGM…VVEKAGYHAA (64 aa)). Residues Cys26 and Cys29 each contribute to the a metal cation site. Transmembrane regions (helical) follow at residues 105-125 (LLVA…FAIV), 132-152 (GWGY…AWPF), 167-187 (METL…SSVF), 201-221 (AILN…VFVL), 361-381 (IAGV…AAWL), and 390-410 (AFSV…GLAT). Asp446 functions as the 4-aspartylphosphate intermediate in the catalytic mechanism. 2 helical membrane-spanning segments follow: residues 491-511 (MAAA…FVAV) and 714-734 (AIPI…AMAF).

This sequence belongs to the cation transport ATPase (P-type) (TC 3.A.3) family. Type IB subfamily.

Its subcellular location is the cell membrane. The catalysed reaction is ATP + H2O = ADP + phosphate + H(+). The chain is Cation-transporting P-type ATPase B (ctpB) from Mycobacterium tuberculosis (strain ATCC 25618 / H37Rv).